Reading from the N-terminus, the 275-residue chain is MPLMKFKPTSPGRRSAVRVVTPDLHKGAPHAALLDSQSKSGGRNHHGRITVRHVGGGHKQHYRIIDFKRNKEGIPARVERIEYDPNRTAHIALLCYVDGERRYIIAPKGLKAGDQVIAGANAPIKTGNALPLRNIPVGTTVHGIELKPGKGAQIARAAGAAVQLVAREGIYATLRLRSGEMRKVPVECRATIGEVGNDEHNLEKLGKAGAKRRRGVRPTVRGAAMNANDHPHGGGEAKAGQGNPHPVTPWGVPTKGYKTRKNKRTQQFIVRDRRG.

The segment at 223-275 (AAMNANDHPHGGGEAKAGQGNPHPVTPWGVPTKGYKTRKNKRTQQFIVRDRRG) is disordered.

This sequence belongs to the universal ribosomal protein uL2 family. Part of the 50S ribosomal subunit. Forms a bridge to the 30S subunit in the 70S ribosome.

In terms of biological role, one of the primary rRNA binding proteins. Required for association of the 30S and 50S subunits to form the 70S ribosome, for tRNA binding and peptide bond formation. It has been suggested to have peptidyltransferase activity; this is somewhat controversial. Makes several contacts with the 16S rRNA in the 70S ribosome. The sequence is that of Large ribosomal subunit protein uL2 from Xanthomonas campestris pv. campestris (strain 8004).